The primary structure comprises 151 residues: Phosphopantetheine adenylyltransferase (151 aa).

Residue threonine 9 coordinates substrate. ATP contacts are provided by residues 9–10 (TF) and histidine 17. Lysine 41, threonine 73, and arginine 87 together coordinate substrate. ATP-binding positions include 88–90 (GIR), glutamate 98, and 122–128 (LTSISST).

The protein belongs to the bacterial CoaD family. As to quaternary structure, homohexamer. Mg(2+) serves as cofactor.

Its subcellular location is the cytoplasm. The catalysed reaction is (R)-4'-phosphopantetheine + ATP + H(+) = 3'-dephospho-CoA + diphosphate. It functions in the pathway cofactor biosynthesis; coenzyme A biosynthesis; CoA from (R)-pantothenate: step 4/5. Its function is as follows. Reversibly transfers an adenylyl group from ATP to 4'-phosphopantetheine, yielding dephospho-CoA (dPCoA) and pyrophosphate. This chain is Phosphopantetheine adenylyltransferase, found in Phocaeicola vulgatus (strain ATCC 8482 / DSM 1447 / JCM 5826 / CCUG 4940 / NBRC 14291 / NCTC 11154) (Bacteroides vulgatus).